The chain runs to 293 residues: 16S rRNA (guanine(1405)-N(7))-methyltransferase (293 aa).

Residues Phe-47, 80–82, Arg-86, Ala-111, Asp-134, 160–161, Leu-176, and Gln-185 contribute to the S-adenosyl-L-methionine site; these read HAS and DL. Low complexity predominate over residues 258–274; sequence GRPAPAEGAAEPGATRP. The tract at residues 258 to 293 is disordered; it reads GRPAPAEGAAEPGATRPVVDVPATARPDADRVDPTG. Residues 284–293 show a composition bias toward basic and acidic residues; sequence PDADRVDPTG.

The protein belongs to the methyltransferase superfamily. Aminoglycoside resistance family.

The enzyme catalyses guanosine(1405) in 16S rRNA + S-adenosyl-L-methionine = N(7)-methylguanosine(1405) in 16S rRNA + S-adenosyl-L-homocysteine. In terms of biological role, specifically methylates the N(7) position of guanine 1405 in 16S rRNA. Confers resistance to aminoglycosides. The protein is 16S rRNA (guanine(1405)-N(7))-methyltransferase (fmrO) of Micromonospora olivasterospora.